Reading from the N-terminus, the 404-residue chain is 2,3-diketo-5-methylthiopentyl-1-phosphate enolase (404 aa).

The Proton acceptor role is filled by lysine 91. Substrate-binding positions include lysine 140, 166 to 169, histidine 257, glycine 329, and 351 to 352; these read KDDE and GG. The Mg(2+) site is built by lysine 166, aspartate 168, and glutamate 169. Lysine 166 carries the N6-carboxylysine modification.

This sequence belongs to the RuBisCO large chain family. Type IV subfamily. In terms of assembly, homodimer. The cofactor is Mg(2+).

It catalyses the reaction 5-methylsulfanyl-2,3-dioxopentyl phosphate = 2-hydroxy-5-methylsulfanyl-3-oxopent-1-enyl phosphate. Its pathway is amino-acid biosynthesis; L-methionine biosynthesis via salvage pathway; L-methionine from S-methyl-5-thio-alpha-D-ribose 1-phosphate: step 3/6. Its function is as follows. Catalyzes the enolization of 2,3-diketo-5-methylthiopentyl-1-phosphate (DK-MTP-1-P) into 2-hydroxy-3-keto-5-methylthiopentenyl-1-phosphate (HK-MTPenyl-1-P). This Bacillus velezensis (strain DSM 23117 / BGSC 10A6 / LMG 26770 / FZB42) (Bacillus amyloliquefaciens subsp. plantarum) protein is 2,3-diketo-5-methylthiopentyl-1-phosphate enolase.